Reading from the N-terminus, the 484-residue chain is Ribosomal protein uS12 methylthiotransferase RimO (484 aa).

One can recognise an MTTase N-terminal domain in the interval 8–119 (RRVAMVTLGC…LAERLDDVLA (112 aa)). Positions 17, 53, 82, 184, 188, and 191 each coordinate [4Fe-4S] cluster. One can recognise a Radical SAM core domain in the interval 170-401 (LDDSPLAALK…ALADELVAQR (232 aa)). A TRAM domain is found at 403 to 469 (EDRVGTEVRV…GVDLVVRPVG (67 aa)).

This sequence belongs to the methylthiotransferase family. RimO subfamily. The cofactor is [4Fe-4S] cluster.

The protein localises to the cytoplasm. It catalyses the reaction L-aspartate(89)-[ribosomal protein uS12]-hydrogen + (sulfur carrier)-SH + AH2 + 2 S-adenosyl-L-methionine = 3-methylsulfanyl-L-aspartate(89)-[ribosomal protein uS12]-hydrogen + (sulfur carrier)-H + 5'-deoxyadenosine + L-methionine + A + S-adenosyl-L-homocysteine + 2 H(+). Functionally, catalyzes the methylthiolation of an aspartic acid residue of ribosomal protein uS12. This is Ribosomal protein uS12 methylthiotransferase RimO from Saccharopolyspora erythraea (strain ATCC 11635 / DSM 40517 / JCM 4748 / NBRC 13426 / NCIMB 8594 / NRRL 2338).